Here is a 214-residue protein sequence, read N- to C-terminus: Phosphatidylserine decarboxylase proenzyme (214 aa).

S182 functions as the Schiff-base intermediate with substrate; via pyruvic acid in the catalytic mechanism. A Pyruvic acid (Ser); by autocatalysis modification is found at S182.

The protein belongs to the phosphatidylserine decarboxylase family. PSD-A subfamily. Heterodimer of a large membrane-associated beta subunit and a small pyruvoyl-containing alpha subunit. Requires pyruvate as cofactor. In terms of processing, is synthesized initially as an inactive proenzyme. Formation of the active enzyme involves a self-maturation process in which the active site pyruvoyl group is generated from an internal serine residue via an autocatalytic post-translational modification. Two non-identical subunits are generated from the proenzyme in this reaction, and the pyruvate is formed at the N-terminus of the alpha chain, which is derived from the carboxyl end of the proenzyme. The post-translation cleavage follows an unusual pathway, termed non-hydrolytic serinolysis, in which the side chain hydroxyl group of the serine supplies its oxygen atom to form the C-terminus of the beta chain, while the remainder of the serine residue undergoes an oxidative deamination to produce ammonia and the pyruvoyl prosthetic group on the alpha chain.

It localises to the cell membrane. It carries out the reaction a 1,2-diacyl-sn-glycero-3-phospho-L-serine + H(+) = a 1,2-diacyl-sn-glycero-3-phosphoethanolamine + CO2. It functions in the pathway phospholipid metabolism; phosphatidylethanolamine biosynthesis; phosphatidylethanolamine from CDP-diacylglycerol: step 2/2. Functionally, catalyzes the formation of phosphatidylethanolamine (PtdEtn) from phosphatidylserine (PtdSer). The chain is Phosphatidylserine decarboxylase proenzyme from Burkholderia cenocepacia (strain ATCC BAA-245 / DSM 16553 / LMG 16656 / NCTC 13227 / J2315 / CF5610) (Burkholderia cepacia (strain J2315)).